The primary structure comprises 285 residues: Inositol polyphosphate 1-phosphatase (285 aa).

The Mg(2+) site is built by E68, D106, L108, and D109. 7 residues coordinate 1D-myo-inositol 1,4-bisphosphate: D109, G110, T111, S173, G195, S197, and K200. Residue D223 participates in Mg(2+) binding.

It belongs to the inositol monophosphatase superfamily. In terms of assembly, monomer. Mg(2+) serves as cofactor.

It localises to the cytoplasm. The enzyme catalyses 1D-myo-inositol 1,4-bisphosphate + H2O = 1D-myo-inositol 4-phosphate + phosphate. The catalysed reaction is adenosine 3',5'-bisphosphate + H2O = AMP + phosphate. Its activity is regulated as follows. Partially inhibited by Li(2+). Functionally, catalyzes the hydrolysis of the 1-position phosphate from inositol 1,4-bisphosphate. Is also able to convert 3'(2')-phosphoadenosine 5'-phosphate (PAP) to AMP but with less efficiency. The protein is Inositol polyphosphate 1-phosphatase of Entamoeba histolytica (strain ATCC 30459 / HM-1:IMSS / ABRM).